Here is a 115-residue protein sequence, read N- to C-terminus: NADH-ubiquinone oxidoreductase chain 3 (115 aa).

The next 3 helical transmembrane spans lie at 3-23 (LLLT…IAFW), 55-75 (FFLV…LLPL), and 84-104 (LNTM…SLAY).

It belongs to the complex I subunit 3 family. Core subunit of respiratory chain NADH dehydrogenase (Complex I) which is composed of 45 different subunits. Interacts with TMEM186. Interacts with TMEM242.

The protein localises to the mitochondrion inner membrane. It carries out the reaction a ubiquinone + NADH + 5 H(+)(in) = a ubiquinol + NAD(+) + 4 H(+)(out). Its function is as follows. Core subunit of the mitochondrial membrane respiratory chain NADH dehydrogenase (Complex I) which catalyzes electron transfer from NADH through the respiratory chain, using ubiquinone as an electron acceptor. Essential for the catalytic activity of complex I. This Balaenoptera musculus (Blue whale) protein is NADH-ubiquinone oxidoreductase chain 3.